We begin with the raw amino-acid sequence, 193 residues long: Protein PrsJ (193 aa).

The N-terminal stretch at 1–27 is a signal peptide; the sequence is MVVNKTTAVLYLIALSLSGFIHTFLRA.

It is found in the periplasm. This protein maintains pilus integrity and thus is an important participant in pilus assembly. It may function as molecular chaperone directly or indirectly in the correct assembly of PapA subunits. This Escherichia coli protein is Protein PrsJ (prsJ).